A 1136-amino-acid polypeptide reads, in one-letter code: Collagen alpha-1(XIX) chain (1136 aa).

The N-terminal stretch at 1–23 is a signal peptide; that stretch reads MRHTGSWKLWTWVTTFLLPACTC. Asparagine 47 carries an N-linked (GlcNAc...) asparagine glycan. One can recognise a Laminin G-like domain in the interval 47 to 231; sequence NKSELSGFDL…LHQLRIYCNA (185 aa). 4 disordered regions span residues 252 to 272, 289 to 673, 699 to 1005, and 1043 to 1136; these read DFGS…SSYL, EEAG…PGDP, GLKS…TPAD, and SAQA…AGGK. The segment covering 254–266 has biased composition (low complexity); it reads GSTTSSWGTSNTG. The interval 289–348 is triple-helical region 1 (COL1); it reads EEAGLPGTLRSIGHKGDKGEPGEHGLDGTPGLPGQKGEQGLEGIKGEIGEKGEPGAKGDS. Collagen-like domains follow at residues 292 to 346, 347 to 388, and 389 to 430; these read GLPG…GAKG, DSGL…ALTG, and SIGI…GLQG. 2 stretches are compositionally biased toward basic and acidic residues: residues 302–314 and 332–344; these read HKGD…EHGL and IKGE…EPGA. The interval 367–426 is triple-helical region 2 (COL2); the sequence is GPPGPKGDKGDMGPPGPPALTGSIGIQGPQGPPGKEGQRGRRGKTGPPGNPGPPGPPGPP. Residues 387-401 are compositionally biased toward low complexity; sequence TGSIGIQGPQGPPGK. The segment covering 414 to 426 has biased composition (pro residues); sequence PGNPGPPGPPGPP. Low complexity predominate over residues 428-437; the sequence is LQGLQQPFGG. Positions 442–682 are triple-helical region 3 (COL3); that stretch reads GTGEHGASGP…PIALPLLGDI (241 aa). Positions 472–490 are enriched in basic and acidic residues; the sequence is HKGEPGEPLTKGEKGDRGE. Low complexity-rich tracts occupy residues 511 to 523 and 567 to 577; these read LLGS…QQGP and PGLKGDAGPPG. Collagen-like domains are found at residues 519-577, 578-618, 620-673, 722-777, 778-810, and 833-891; these read GQQG…GPPG, ISLP…GPPG, GIPG…PGDP, KGDV…GPPG, LTGR…GPPG, and GYPG…APGP. The segment covering 634 to 645 has biased composition (low complexity); it reads PGIQGPRGLPGL. The triple-helical region 4 (COL4) stretch occupies residues 694–812; sequence QANVPGLKSI…PGPPGPPGVP (119 aa). 2 stretches are compositionally biased toward basic and acidic residues: residues 714–725 and 737–758; these read GKYDPAARKGDV and EGPK…KGDE. A compositionally biased stretch (low complexity) spans 764 to 788; the sequence is PGLSGAPGPTGPPGLTGRTGHPGPT. 2 stretches are compositionally biased toward pro residues: residues 800 to 811 and 834 to 846; these read PGKPGPPGPPGV and YPGP…PKGD. The tract at residues 827–1006 is triple-helical region 5 (COL5); sequence GGVNVPGYPG…PGIPGTPADA (180 aa). The span at 877-886 shows a compositional bias: low complexity; it reads PGIAGISGKP. The span at 937–948 shows a compositional bias: basic and acidic residues; sequence PGDRGPKGERGD. The short motif at 946 to 948 is the Cell attachment site element; sequence RGD. The segment at 1048-1105 is triple-helical region 6 (COL6); sequence GRPGPPGKDGLPGPPGDPGPQGYRGQKGERGEPGIGLPGSPGLPGSSAVGLPGSPGAP. Over residues 1087-1101 the composition is skewed to low complexity; the sequence is SPGLPGSSAVGLPGS. A compositionally biased stretch (pro residues) spans 1102–1113; it reads PGAPGPQGPPGP.

Belongs to the fibril-associated collagens with interrupted helices (FACIT) family. As to quaternary structure, oligomer; disulfide-linked. Post-translationally, prolines at the third position of the tripeptide repeating unit (G-X-Y) are hydroxylated in some or all of the chains.

The protein resides in the secreted. It is found in the extracellular space. It localises to the extracellular matrix. Its function is as follows. May act as a cross-bridge between fibrils and other extracellular matrix molecules. Involved in skeletal myogenesis in the developing esophagus. May play a role in organization of the pericellular matrix or the sphinteric smooth muscle. This Mus musculus (Mouse) protein is Collagen alpha-1(XIX) chain.